The primary structure comprises 303 residues: Probable serine/threonine-protein kinase FPV212 (303 aa).

The 279-residue stretch at 25–303 (WILGKQLGSG…NYESLKQMFL (279 aa)) folds into the Protein kinase domain. ATP contacts are provided by residues 31 to 39 (LGSGGFGLV) and Lys54. Catalysis depends on Asp160, which acts as the Proton acceptor.

Belongs to the protein kinase superfamily. Ser/Thr protein kinase family. Poxviruses subfamily.

The catalysed reaction is L-seryl-[protein] + ATP = O-phospho-L-seryl-[protein] + ADP + H(+). It carries out the reaction L-threonyl-[protein] + ATP = O-phospho-L-threonyl-[protein] + ADP + H(+). In Vertebrata (FPV), this protein is Probable serine/threonine-protein kinase FPV212.